Reading from the N-terminus, the 431-residue chain is Glutamate-1-semialdehyde 2,1-aminomutase (431 aa).

Lys-269 is modified (N6-(pyridoxal phosphate)lysine).

The protein belongs to the class-III pyridoxal-phosphate-dependent aminotransferase family. HemL subfamily. As to quaternary structure, homodimer. It depends on pyridoxal 5'-phosphate as a cofactor.

It is found in the cytoplasm. The enzyme catalyses (S)-4-amino-5-oxopentanoate = 5-aminolevulinate. Its pathway is porphyrin-containing compound metabolism; protoporphyrin-IX biosynthesis; 5-aminolevulinate from L-glutamyl-tRNA(Glu): step 2/2. It participates in porphyrin-containing compound metabolism; chlorophyll biosynthesis. This is Glutamate-1-semialdehyde 2,1-aminomutase from Chlorobium luteolum (strain DSM 273 / BCRC 81028 / 2530) (Pelodictyon luteolum).